The sequence spans 149 residues: MEEKRKKIRVLVGGVFDILHVGHIHFLKQAKELGDELVVIVAHDETVRMQKRREPINPAEDRAELLRAIRYVDEVYIGTPGTIDMELVKRIDPDVIAIGPDQFFNCEKLKEELRKHGINAEVIRIPYLYKSDRAKTSKIIQRIVETFCE.

ATP is bound by residues V15–F16, H20–H23, and D101.

The protein belongs to the archaeal FAD synthase family. Homodimer. It depends on a divalent metal cation as a cofactor.

It carries out the reaction FMN + ATP + H(+) = FAD + diphosphate. It functions in the pathway cofactor biosynthesis; FAD biosynthesis; FAD from FMN: step 1/1. Its function is as follows. Catalyzes the transfer of the AMP portion of ATP to flavin mononucleotide (FMN) to produce flavin adenine dinucleotide (FAD) coenzyme. The chain is FAD synthase from Thermococcus kodakarensis (strain ATCC BAA-918 / JCM 12380 / KOD1) (Pyrococcus kodakaraensis (strain KOD1)).